A 1486-amino-acid chain; its full sequence is Chromosome partition protein MukB (1486 aa).

An ATP-binding site is contributed by 34–41 (GGNGAGKS). 3 coiled-coil regions span residues 326-418 (LEAD…QYNQ), 444-480 (LETFQAKELEATEKMLSLEQKMSMAQTAHSQFEQAYQ), and 509-603 (RHLA…RAPV). Residues 666–783 (PGGSEDQRLN…EVPLFGRAAR (118 aa)) are flexible hinge. 3 coiled-coil regions span residues 835 to 923 (EAEI…AKLE), 977 to 1115 (EMLS…TAKA), and 1209 to 1266 (VEAI…QNVS).

The protein belongs to the SMC family. MukB subfamily. In terms of assembly, homodimerization via its hinge domain. Binds to DNA via its C-terminal region. Interacts, and probably forms a ternary complex, with MukE and MukF via its C-terminal region. The complex formation is stimulated by calcium or magnesium. Interacts with tubulin-related protein FtsZ.

The protein resides in the cytoplasm. The protein localises to the nucleoid. Its function is as follows. Plays a central role in chromosome condensation, segregation and cell cycle progression. Functions as a homodimer, which is essential for chromosome partition. Involved in negative DNA supercoiling in vivo, and by this means organize and compact chromosomes. May achieve or facilitate chromosome segregation by condensation DNA from both sides of a centrally located replisome during cell division. The chain is Chromosome partition protein MukB from Escherichia coli O157:H7.